Here is a 185-residue protein sequence, read N- to C-terminus: V-type ATP synthase subunit E (185 aa).

This sequence belongs to the V-ATPase E subunit family.

Functionally, produces ATP from ADP in the presence of a proton gradient across the membrane. The polypeptide is V-type ATP synthase subunit E (Deinococcus radiodurans (strain ATCC 13939 / DSM 20539 / JCM 16871 / CCUG 27074 / LMG 4051 / NBRC 15346 / NCIMB 9279 / VKM B-1422 / R1)).